Here is a 416-residue protein sequence, read N- to C-terminus: Enterobactin exporter EntS (416 aa).

Topologically, residues 1 to 21 (MNKQSWLLNLSLLKTHPAFRA) are cytoplasmic. Residues 22–42 (VFLARFISIVSLGLLGVAVPV) form a helical membrane-spanning segment. Residues 43–55 (QIQMMTHSTWLVG) lie on the Periplasmic side of the membrane. The helical transmembrane segment at 56-76 (LSVTLTGGAMFVGLMVGGVLA) threads the bilayer. At 77–83 (DRYERKK) the chain is on the cytoplasmic side. Residues 84 to 104 (VILLARGTCGIGFIGLCLNAL) form a helical membrane-spanning segment. Topologically, residues 105–109 (LPEPS) are periplasmic. A helical transmembrane segment spans residues 110 to 130 (LLAIYLLGLWDGFFASLGVTA). The Cytoplasmic segment spans residues 131–156 (LLAATPALVGRENLMQAGAITMLTVR). Residues 157–177 (LGSVISPMIGGLLLATGGVAW) traverse the membrane as a helical segment. Asn-178 is a topological domain (periplasmic). A helical membrane pass occupies residues 179 to 199 (YGLAAAGTFITLLPLLSLPAL). Topologically, residues 200–218 (PPPPQPREHPLKSLLAGFR) are cytoplasmic. A helical membrane pass occupies residues 219–239 (FLLASPLVGGIALLGGLLTMA). Residues 240–256 (SAVRVLYPALADNWQMS) lie on the Periplasmic side of the membrane. The helical transmembrane segment at 257-277 (AAEIGFLYAAIPLGAAIGALT) threads the bilayer. Topologically, residues 278 to 287 (SGKLAHSARP) are cytoplasmic. Residues 288–307 (GLLMLLSTLGSFLAIGLFGL) traverse the membrane as a helical segment. Residues 308–313 (MPMWIL) are Periplasmic-facing. The chain crosses the membrane as a helical span at residues 314-336 (GVVCLALFGWLSAVSSLLQYTML). The Cytoplasmic segment spans residues 337 to 356 (QTQTPEAMLGRINGLWTAQN). Residues 357 to 377 (VTGDAIGAALLGGLGAMMTPV) form a helical membrane-spanning segment. A topological domain (periplasmic) is located at residue Ala-378. A helical membrane pass occupies residues 379 to 399 (SASASGFGLLIIGVLLLLVLV). The Cytoplasmic portion of the chain corresponds to 400–416 (ELRRFRQTPPQVTASDS).

Belongs to the major facilitator superfamily. EntS (TC 2.A.1.38) family.

The protein localises to the cell inner membrane. Its function is as follows. Component of an export pathway for enterobactin. The sequence is that of Enterobactin exporter EntS from Shigella boydii serotype 4 (strain Sb227).